A 169-amino-acid polypeptide reads, in one-letter code: Probable calcium-binding protein CML13 (169 aa).

Positions 1 to 26 (MSTVKGQTRRERPRGARPHGLTKQKR) are disordered. Residues 15-24 (GARPHGLTKQ) show a composition bias toward basic residues. EF-hand domains are found at residues 24 to 59 (QKRQ…LGFE), 60 to 95 (MTEE…KIGE), 97 to 132 (DSKE…LGEN), and 133 to 168 (FTYQ…TGYG). Residues Asp-37, Asp-39, Ser-41, Thr-43, Glu-48, Asp-73, Asp-75, Ser-77, Ser-79, Glu-84, Asp-110, Asp-112, Asn-114, Lys-116, Asp-121, Asp-146, Asn-148, Asp-150, Glu-152, and Glu-157 each contribute to the Ca(2+) site.

In terms of biological role, potential calcium sensor. This is Probable calcium-binding protein CML13 (CML13) from Oryza sativa subsp. japonica (Rice).